The following is a 118-amino-acid chain: MRHKNGYRKLGRTSSHRAALLKNLTIAIVKNGKIETTLEKAKELRSYVEKLITRARKGDFNAHKFVFAALQDKEATNMLVNEVAPKFATKNGGYTRIIKTRTRRGDAAEMAYIELINE.

Belongs to the bacterial ribosomal protein bL17 family. In terms of assembly, part of the 50S ribosomal subunit. Contacts protein L32.

This chain is Large ribosomal subunit protein bL17, found in Campylobacter hominis (strain ATCC BAA-381 / DSM 21671 / CCUG 45161 / LMG 19568 / NCTC 13146 / CH001A).